The following is a 216-amino-acid chain: Kynurenine formamidase (216 aa).

Residue phenylalanine 21 participates in substrate binding. The Zn(2+) site is built by histidine 51, histidine 55, and aspartate 57. The active-site Proton donor/acceptor is histidine 61. Positions 167 and 179 each coordinate Zn(2+).

It belongs to the Cyclase 1 superfamily. KynB family. As to quaternary structure, homodimer. Zn(2+) is required as a cofactor.

It catalyses the reaction N-formyl-L-kynurenine + H2O = L-kynurenine + formate + H(+). Its pathway is amino-acid degradation; L-tryptophan degradation via kynurenine pathway; L-kynurenine from L-tryptophan: step 2/2. Its function is as follows. Catalyzes the hydrolysis of N-formyl-L-kynurenine to L-kynurenine, the second step in the kynurenine pathway of tryptophan degradation. This Paracidovorax citrulli (strain AAC00-1) (Acidovorax citrulli) protein is Kynurenine formamidase.